Consider the following 69-residue polypeptide: Putative defensin-like protein 312 (69 aa).

The first 19 residues, 1–19 (MSCFSFLVYFLLFIVTKMS), serve as a signal peptide directing secretion. A disulfide bridge links Cys45 with Cys57.

Belongs to the DEFL family.

Its subcellular location is the secreted. This chain is Putative defensin-like protein 312, found in Arabidopsis thaliana (Mouse-ear cress).